The primary structure comprises 503 residues: Activin receptor type-1-like (503 aa).

The first 21 residues, 1-21 (MTLGSPRKGLLMLLMALVTQG), serve as a signal peptide directing secretion. At 22 to 118 (DPVKPSRGPL…PSEQPGTDGQ (97 aa)) the chain is on the extracellular side. Intrachain disulfides connect Cys-34-Cys-51, Cys-36-Cys-41, and Cys-46-Cys-69. The mediates specificity for BMP ligand stretch occupies residues 73–76 (HREL). 2 cysteine pairs are disulfide-bonded: Cys-77–Cys-89 and Cys-90–Cys-95. The N-linked (GlcNAc...) asparagine glycan is linked to Asn-98. The chain crosses the membrane as a helical span at residues 119-141 (LALILGPVLALLALVALGVLGLW). The Cytoplasmic segment spans residues 142 to 503 (HVRRRQEKQR…NSPEKPKVIQ (362 aa)). Phosphoserine occurs at positions 155, 160, and 161. The 30-residue stretch at 172-201 (SMLGDLLDSDCTTGSGSGLPFLVQRTVARQ) folds into the GS domain. A Protein kinase domain is found at 202-492 (VALVECVGKG…LRIKKTLQKI (291 aa)). ATP contacts are provided by residues 208-216 (VGKGRYGEV) and Lys-229. Catalysis depends on Asp-330, which acts as the Proton acceptor.

This sequence belongs to the protein kinase superfamily. TKL Ser/Thr protein kinase family. TGFB receptor subfamily. Interacts with TSC22D1/TSC-22. Requires Mg(2+) as cofactor. It depends on Mn(2+) as a cofactor.

Its subcellular location is the cell membrane. The enzyme catalyses L-threonyl-[receptor-protein] + ATP = O-phospho-L-threonyl-[receptor-protein] + ADP + H(+). It carries out the reaction L-seryl-[receptor-protein] + ATP = O-phospho-L-seryl-[receptor-protein] + ADP + H(+). Type I receptor for TGF-beta family ligands BMP9/GDF2 and BMP10 and important regulator of normal blood vessel development. On ligand binding, forms a receptor complex consisting of two type II and two type I transmembrane serine/threonine kinases. Type II receptors phosphorylate and activate type I receptors which autophosphorylate, then bind and activate SMAD transcriptional regulators. May bind activin as well. The protein is Activin receptor type-1-like (ACVRL1) of Homo sapiens (Human).